The chain runs to 1037 residues: PH and SEC7 domain-containing protein 3 (1037 aa).

The interval 37 to 70 is disordered; it reads EEKTPDSSDHGGSTLLPPTVTNEFPEYGTMEEGG. Phosphoserine is present on S76. Disordered stretches follow at residues 169 to 189, 236 to 255, 262 to 284, 304 to 335, and 353 to 375; these read TASH…GKSP, RVPE…HNPV, REQR…SMGR, EAES…ACGV, and APSE…ESGE. Positions 237 to 251 are enriched in low complexity; sequence VPESACPVSSSSAGS. Residues 262-277 show a composition bias toward basic and acidic residues; the sequence is REQRSDLGREHPRGYD. Residues 515 to 723 enclose the SEC7 domain; the sequence is NSVYTRGPQE…KALYNSIKNE (209 aa). Over residues 730 to 747 the composition is skewed to basic and acidic residues; sequence DDEEKKKSPSEGTDEKAN. The tract at residues 730 to 762 is disordered; the sequence is DDEEKKKSPSEGTDEKANGTHPKTISRIGSTTN. Over residues 750 to 762 the composition is skewed to polar residues; sequence HPKTISRIGSTTN. S759 carries the phosphoserine modification. Residues 774 to 887 enclose the PH domain; it reads AVYKSGFLAR…WINKINCVAA (114 aa). Residues 911–941 are a coiled coil; sequence ATTTKLSQEEQLKSHESKLKQITTELAEHRS. The tract at residues 984 to 1037 is disordered; it reads LLTTDGNEPVGLKKSHSSPSLNPDASPVTAKVKRNVSERKDHRPETPGIKQKVT. S998, S1000, S1001, S1003, and S1009 each carry phosphoserine. The segment covering 1018–1028 has biased composition (basic and acidic residues); it reads NVSERKDHRPE.

As to expression, ubiquitously expressed, with highest levels in liver. Present in brain, with highest levels in olfactory bulb, cortex, hippocampal pyramidal cell layer and cerebellar granule cell layer (at protein level).

Its subcellular location is the cell membrane. The protein localises to the cell projection. It is found in the ruffle membrane. It localises to the postsynaptic density. Guanine nucleotide exchange factor for ARF6. The protein is PH and SEC7 domain-containing protein 3 (Psd3) of Mus musculus (Mouse).